The sequence spans 153 residues: MKNNTDILIKVIKLNSNNLPLPSYSTENSSGMDLYSAMTQDVILAPGCRACINTGIAISVPNGYEAQVRPRSGLALKFGITVLNTPGTIDADYRGEIKVILINLGHETYTIKYGDRIAQMVIAPVIHASWNLVKDLDDDTTKRGDQGFGSTGI.

Substrate is bound by residues R71–G73, N84, T88–D90, and K98.

This sequence belongs to the dUTPase family. Mg(2+) serves as cofactor.

It catalyses the reaction dUTP + H2O = dUMP + diphosphate + H(+). It participates in pyrimidine metabolism; dUMP biosynthesis; dUMP from dCTP (dUTP route): step 2/2. This enzyme is involved in nucleotide metabolism: it produces dUMP, the immediate precursor of thymidine nucleotides and it decreases the intracellular concentration of dUTP so that uracil cannot be incorporated into DNA. This chain is Deoxyuridine 5'-triphosphate nucleotidohydrolase, found in Ehrlichia canis (strain Jake).